The chain runs to 446 residues: Asparagine--tRNA ligase (446 aa).

Belongs to the class-II aminoacyl-tRNA synthetase family. As to quaternary structure, homodimer.

It is found in the cytoplasm. It carries out the reaction tRNA(Asn) + L-asparagine + ATP = L-asparaginyl-tRNA(Asn) + AMP + diphosphate + H(+). The sequence is that of Asparagine--tRNA ligase from Sorangium cellulosum (strain So ce56) (Polyangium cellulosum (strain So ce56)).